Consider the following 407-residue polypeptide: MAAFDTIDDLPADSRVLVRLDLNSPIEDGKPQDNRRFERHAETVRELADAGHRVVLMAHQGRPGRDDFTSLSGHADILADHVGRDVAFVADTFGDEALDAIDALGAGEVLLLENTRMCDDELPEADPEEKAETEFVQTLAPQFDAYVNDAYSAAHRKHASLVGFPLVLPAYAGRVMETEYEANTAIATREFDGPVTMVVGGTKATDVIGVMDALDDRVDRFLLGGVAGELFLRAAGHPVGHDLEGTDLFDEQWEENRELIESVLDERGDAIRLATDLAYEGPDGDRAEVAVDDIDEKTDGYLDVGSETIAAYEPPIHESDAVFVKGALGVFEDERFADGTVGVLEAIAETDCFSVVGGGDTSRAIEMYGLDEDDFSHVSIAGGAYIRALTGEPLPAVEVLEAAAGRQ.

Substrate is bound by residues 21 to 23 (DLN), arginine 36, 59 to 62 (HQGR), arginine 116, and arginine 156. Residues glutamate 332 and 358–361 (GGDT) each bind ATP.

The protein belongs to the phosphoglycerate kinase family. Monomer.

It is found in the cytoplasm. It catalyses the reaction (2R)-3-phosphoglycerate + ATP = (2R)-3-phospho-glyceroyl phosphate + ADP. Its pathway is carbohydrate degradation; glycolysis; pyruvate from D-glyceraldehyde 3-phosphate: step 2/5. In Halorubrum lacusprofundi (strain ATCC 49239 / DSM 5036 / JCM 8891 / ACAM 34), this protein is Phosphoglycerate kinase.